We begin with the raw amino-acid sequence, 61 residues long: Protein translocase subunit SecE (61 aa).

A helical membrane pass occupies residues Gly-38–Ile-58.

The protein belongs to the SecE/SEC61-gamma family. Component of the Sec protein translocase complex. Heterotrimer consisting of SecY (alpha), SecG (beta) and SecE (gamma) subunits. The heterotrimers can form oligomers, although 1 heterotrimer is thought to be able to translocate proteins. Interacts with the ribosome. May interact with SecDF, and other proteins may be involved.

It is found in the cell membrane. Its function is as follows. Essential subunit of the Sec protein translocation channel SecYEG. Clamps together the 2 halves of SecY. May contact the channel plug during translocation. The polypeptide is Protein translocase subunit SecE (Thermococcus onnurineus (strain NA1)).